Consider the following 140-residue polypeptide: Large ribosomal subunit protein uL13 (140 aa).

It belongs to the universal ribosomal protein uL13 family. In terms of assembly, part of the 50S ribosomal subunit.

In terms of biological role, this protein is one of the early assembly proteins of the 50S ribosomal subunit, although it is not seen to bind rRNA by itself. It is important during the early stages of 50S assembly. The sequence is that of Large ribosomal subunit protein uL13 from Nautilia profundicola (strain ATCC BAA-1463 / DSM 18972 / AmH).